The sequence spans 442 residues: Methionine aminopeptidase 2-1 (442 aa).

A disordered region spans residues 1-92 (MAAQASEELE…ISELFPNNQY (92 aa)). A compositionally biased stretch (polar residues) spans 15–25 (NGQNGHAQEQV). The span at 30–47 (EAADNDDSEDDEKEEEGG) shows a compositional bias: acidic residues. Residues 56–72 (AKKKKKRKPKKKKKGGA) show a composition bias toward basic residues. His195 is a binding site for substrate. A divalent metal cation is bound by residues Asp215, Asp226, and His295. Position 303 (His303) interacts with substrate. Positions 328 and 423 each coordinate a divalent metal cation.

It belongs to the peptidase M24A family. Methionine aminopeptidase eukaryotic type 2 subfamily. The cofactor is Co(2+). Requires Zn(2+) as cofactor. Mn(2+) is required as a cofactor. It depends on Fe(2+) as a cofactor.

Its subcellular location is the cytoplasm. It catalyses the reaction Release of N-terminal amino acids, preferentially methionine, from peptides and arylamides.. Cotranslationally removes the N-terminal methionine from nascent proteins. The N-terminal methionine is often cleaved when the second residue in the primary sequence is small and uncharged (Met-Ala-, Cys, Gly, Pro, Ser, Thr, or Val). This is Methionine aminopeptidase 2-1 from Talaromyces marneffei (strain ATCC 18224 / CBS 334.59 / QM 7333) (Penicillium marneffei).